A 297-amino-acid chain; its full sequence is RNA polymerase sigma-F factor (297 aa).

The tract at residues 1 to 46 (MTVPASTAPQVPPQQDPQVPHPQEPREEPHEEPPSPPAAPRPQSRG) is disordered. A compositionally biased stretch (pro residues) spans 10–22 (QVPPQQDPQVPHP). Basic and acidic residues predominate over residues 23–33 (QEPREEPHEEP). Residues 101 to 114 (DVVQVGTIGLINAI) carry the Polymerase core binding motif. The segment at residues 264 to 283 (QSQISAELGVSQMHVSRLLA) is a DNA-binding region (H-T-H motif).

The protein belongs to the sigma-70 factor family. SigB subfamily.

Functionally, sigma factors are initiation factors that promote the attachment of RNA polymerase to specific initiation sites and are then released. This sigma factor is required for normal spore maturation. The polypeptide is RNA polymerase sigma-F factor (sigF) (Kitasatospora aureofaciens (Streptomyces aureofaciens)).